The primary structure comprises 237 residues: NAD(P)H-quinone oxidoreductase subunit K, chloroplastic (237 aa).

Positions 55, 56, 120, and 151 each coordinate [4Fe-4S] cluster.

This sequence belongs to the complex I 20 kDa subunit family. In terms of assembly, NDH is composed of at least 16 different subunits, 5 of which are encoded in the nucleus. [4Fe-4S] cluster is required as a cofactor.

Its subcellular location is the plastid. The protein resides in the chloroplast thylakoid membrane. The enzyme catalyses a plastoquinone + NADH + (n+1) H(+)(in) = a plastoquinol + NAD(+) + n H(+)(out). It carries out the reaction a plastoquinone + NADPH + (n+1) H(+)(in) = a plastoquinol + NADP(+) + n H(+)(out). Its function is as follows. NDH shuttles electrons from NAD(P)H:plastoquinone, via FMN and iron-sulfur (Fe-S) centers, to quinones in the photosynthetic chain and possibly in a chloroplast respiratory chain. The immediate electron acceptor for the enzyme in this species is believed to be plastoquinone. Couples the redox reaction to proton translocation, and thus conserves the redox energy in a proton gradient. This Nephroselmis olivacea (Green alga) protein is NAD(P)H-quinone oxidoreductase subunit K, chloroplastic.